The following is a 296-amino-acid chain: D-alanine--D-alanine ligase (296 aa).

The region spanning 103 to 293 (KEILMHHRMP…FDSFVKRIIE (191 aa)) is the ATP-grasp domain. 129–180 (ISFPAAVKPSSGGSSIATFKVKSIQELKHAYEEASKYGEVMIEQWVTGKEIT) is an ATP binding site. Asp247, Glu260, and Asn262 together coordinate Mg(2+).

It belongs to the D-alanine--D-alanine ligase family. Mg(2+) serves as cofactor. Mn(2+) is required as a cofactor.

It is found in the cytoplasm. It carries out the reaction 2 D-alanine + ATP = D-alanyl-D-alanine + ADP + phosphate + H(+). Its pathway is cell wall biogenesis; peptidoglycan biosynthesis. Cell wall formation. The sequence is that of D-alanine--D-alanine ligase from Francisella tularensis subsp. holarctica (strain LVS).